The chain runs to 241 residues: Carboxy-S-adenosyl-L-methionine synthase (241 aa).

Residues Y38, 63-65, 88-89, 116-117, N131, and R198 contribute to the S-adenosyl-L-methionine site; these read GCS, DN, and DI.

It belongs to the class I-like SAM-binding methyltransferase superfamily. Cx-SAM synthase family. In terms of assembly, homodimer.

It carries out the reaction prephenate + S-adenosyl-L-methionine = carboxy-S-adenosyl-L-methionine + 3-phenylpyruvate + H2O. Its function is as follows. Catalyzes the conversion of S-adenosyl-L-methionine (SAM) to carboxy-S-adenosyl-L-methionine (Cx-SAM). The protein is Carboxy-S-adenosyl-L-methionine synthase of Haemophilus influenzae (strain PittEE).